The chain runs to 448 residues: Phosphoglucosamine mutase (448 aa).

S100 acts as the Phosphoserine intermediate in catalysis. Residues S100, D240, D242, and D244 each contribute to the Mg(2+) site. S100 carries the post-translational modification Phosphoserine.

This sequence belongs to the phosphohexose mutase family. Mg(2+) is required as a cofactor. Activated by phosphorylation.

It catalyses the reaction alpha-D-glucosamine 1-phosphate = D-glucosamine 6-phosphate. Its function is as follows. Catalyzes the conversion of glucosamine-6-phosphate to glucosamine-1-phosphate. In Alkaliphilus metalliredigens (strain QYMF), this protein is Phosphoglucosamine mutase.